A 541-amino-acid chain; its full sequence is Beta-hexosaminidase subunit A2 (541 aa).

Residues 1-21 (MINKFLTIFLIFSIVIIKVLS) form the signal peptide. The active-site Proton donor is the E314. Residues N322, N336, N356, N435, and N483 are each glycosylated (N-linked (GlcNAc...) asparagine).

Belongs to the glycosyl hydrolase 20 family.

The protein localises to the lysosome. The enzyme catalyses Hydrolysis of terminal non-reducing N-acetyl-D-hexosamine residues in N-acetyl-beta-D-hexosaminides.. In terms of biological role, responsible for the degradation of GM2 gangliosides, and a variety of other molecules containing terminal N-acetyl hexosamines. This chain is Beta-hexosaminidase subunit A2 (hexa2), found in Dictyostelium discoideum (Social amoeba).